A 592-amino-acid polypeptide reads, in one-letter code: Membrane protein insertase YidC (592 aa).

The next 5 helical transmembrane spans lie at 8–28 (LFIA…FVMG), 363–385 (ALGQ…MFPL), 430–450 (INPL…FALY), 493–513 (IWLI…GLTM), and 531–551 (IFAF…AGLV).

Belongs to the OXA1/ALB3/YidC family. Type 1 subfamily. As to quaternary structure, interacts with the Sec translocase complex via SecD. Specifically interacts with transmembrane segments of nascent integral membrane proteins during membrane integration.

Its subcellular location is the cell inner membrane. In terms of biological role, required for the insertion and/or proper folding and/or complex formation of integral membrane proteins into the membrane. Involved in integration of membrane proteins that insert both dependently and independently of the Sec translocase complex, as well as at least some lipoproteins. Aids folding of multispanning membrane proteins. This is Membrane protein insertase YidC from Maricaulis maris (strain MCS10) (Caulobacter maris).